The following is a 207-amino-acid chain: Guanylate kinase (207 aa).

One can recognise a Guanylate kinase-like domain in the interval 6-185; it reads GLLIVLSGPS…AKNRIQCIVE (180 aa). Residue 13-20 coordinates ATP; it reads GPSGVGKG.

The protein belongs to the guanylate kinase family.

The protein localises to the cytoplasm. It carries out the reaction GMP + ATP = GDP + ADP. Functionally, essential for recycling GMP and indirectly, cGMP. The polypeptide is Guanylate kinase (Staphylococcus aureus (strain USA300)).